A 114-amino-acid polypeptide reads, in one-letter code: Nucleoid-associated protein Tlet_0999 (114 aa).

This sequence belongs to the YbaB/EbfC family. As to quaternary structure, homodimer.

It is found in the cytoplasm. Its subcellular location is the nucleoid. Binds to DNA and alters its conformation. May be involved in regulation of gene expression, nucleoid organization and DNA protection. This is Nucleoid-associated protein Tlet_0999 from Pseudothermotoga lettingae (strain ATCC BAA-301 / DSM 14385 / NBRC 107922 / TMO) (Thermotoga lettingae).